The chain runs to 21 residues: Cyanophlyctin (21 aa).

As to expression, expressed by the skin glands.

It localises to the secreted. Its function is as follows. Has antibacterial activity against E.coli HP101BA (MIC=6.4 uM), K.pneumoniae PTCC1388 (MIC=7.3 uM), M.luteus PTCC1625 (MIC=4.7 uM) and S.aureus PTCC1431 (MIC=5.3 uM). Has no or very limited (&lt;3%) hemolytic activity at concentrations of 15 ug/ml and 60 ug/ml, respectively. The polypeptide is Cyanophlyctin (Euphlyctis cyanophlyctis (Skittering frog)).